Reading from the N-terminus, the 1502-residue chain is Clustered mitochondria protein homolog (1502 aa).

6 disordered regions span residues 1-62, 571-615, 755-799, 1054-1085, 1381-1403, and 1429-1502; these read MSES…EPLD, AQAE…NPMM, AEAE…EEDR, KDQE…GETV, ARER…RLGG, and GQGG…GAKR. Low complexity predominate over residues 7 to 35; that stretch reads AAAQNGQAEEQQLQQQLDEQQQLEEQQQL. Over residues 53–62 the composition is skewed to basic and acidic residues; it reads KPKDSTEPLD. The Clu domain occupies 399-693; it reads EILRTQLAFL…RLAPVDVEWL (295 aa). The segment covering 575–586 has biased composition (acidic residues); that stretch reads TEAEAETADAVE. Over residues 587–606 the composition is skewed to basic and acidic residues; the sequence is GEQKKEDWVDVEKPTEKSGS. Over residues 781 to 792 the composition is skewed to low complexity; the sequence is EEQSAAASAAAA. A compositionally biased stretch (basic and acidic residues) spans 1054-1069; sequence KDQEEEENKREENIKS. The segment covering 1429 to 1451 has biased composition (low complexity); that stretch reads GQGGNPSANAAAATAGQGEQANG. The segment covering 1462–1471 has biased composition (basic and acidic residues); the sequence is RGTESLEELV. Positions 1486–1502 are enriched in basic residues; it reads KRGKNALRGKRRTGAKR.

The protein belongs to the CLU family. As to quaternary structure, may associate with the eukaryotic translation initiation factor 3 (eIF-3) complex.

It is found in the cytoplasm. Its function is as follows. mRNA-binding protein involved in proper cytoplasmic distribution of mitochondria. The sequence is that of Clustered mitochondria protein homolog from Cryptococcus neoformans var. neoformans serotype D (strain B-3501A) (Filobasidiella neoformans).